The primary structure comprises 257 residues: Imidazole glycerol phosphate synthase subunit HisF (257 aa).

Active-site residues include Asp11 and Asp130.

Belongs to the HisA/HisF family. In terms of assembly, heterodimer of HisH and HisF.

The protein localises to the cytoplasm. The enzyme catalyses 5-[(5-phospho-1-deoxy-D-ribulos-1-ylimino)methylamino]-1-(5-phospho-beta-D-ribosyl)imidazole-4-carboxamide + L-glutamine = D-erythro-1-(imidazol-4-yl)glycerol 3-phosphate + 5-amino-1-(5-phospho-beta-D-ribosyl)imidazole-4-carboxamide + L-glutamate + H(+). The protein operates within amino-acid biosynthesis; L-histidine biosynthesis; L-histidine from 5-phospho-alpha-D-ribose 1-diphosphate: step 5/9. IGPS catalyzes the conversion of PRFAR and glutamine to IGP, AICAR and glutamate. The HisF subunit catalyzes the cyclization activity that produces IGP and AICAR from PRFAR using the ammonia provided by the HisH subunit. The sequence is that of Imidazole glycerol phosphate synthase subunit HisF from Shewanella halifaxensis (strain HAW-EB4).